The sequence spans 88 residues: Small ribosomal subunit protein bS16c (88 aa).

This sequence belongs to the bacterial ribosomal protein bS16 family.

The protein localises to the plastid. The protein resides in the chloroplast. The chain is Small ribosomal subunit protein bS16c from Lactuca sativa (Garden lettuce).